We begin with the raw amino-acid sequence, 193 residues long: MIGRIQGTLVSVHPPRLLVDCQGISYEVDVPMSTLYQLPQAGQKITLLTHFQVREDAQQLFGFATETEREAFRQLIKISGVGSRTALAVLSGMSVNELAQAIALQEAGRLTQVPGIGKRTAERLCLELKGKLAPDLGVAGGKPQAIETSSEVLQALLALGYSEKEALLALKQIPADTSISDGIRMGLKYLSKA.

The tract at residues Met1–Ala64 is domain I. The tract at residues Thr65–Ala139 is domain II. Residues Ala139–Pro143 are flexible linker. The tract at residues Gln144 to Ala193 is domain III.

Belongs to the RuvA family. As to quaternary structure, homotetramer. Forms an RuvA(8)-RuvB(12)-Holliday junction (HJ) complex. HJ DNA is sandwiched between 2 RuvA tetramers; dsDNA enters through RuvA and exits via RuvB. An RuvB hexamer assembles on each DNA strand where it exits the tetramer. Each RuvB hexamer is contacted by two RuvA subunits (via domain III) on 2 adjacent RuvB subunits; this complex drives branch migration. In the full resolvosome a probable DNA-RuvA(4)-RuvB(12)-RuvC(2) complex forms which resolves the HJ.

The protein localises to the cytoplasm. The RuvA-RuvB-RuvC complex processes Holliday junction (HJ) DNA during genetic recombination and DNA repair, while the RuvA-RuvB complex plays an important role in the rescue of blocked DNA replication forks via replication fork reversal (RFR). RuvA specifically binds to HJ cruciform DNA, conferring on it an open structure. The RuvB hexamer acts as an ATP-dependent pump, pulling dsDNA into and through the RuvAB complex. HJ branch migration allows RuvC to scan DNA until it finds its consensus sequence, where it cleaves and resolves the cruciform DNA. The polypeptide is Holliday junction branch migration complex subunit RuvA (Polynucleobacter necessarius subsp. necessarius (strain STIR1)).